A 658-amino-acid chain; its full sequence is Translation factor GUF1, mitochondrial (658 aa).

The N-terminal 40 residues, 1-40 (MRGCLQTVRWLTSAWQRPPSYPPLSRAAPCRFFNVSIPRN), are a transit peptide targeting the mitochondrion. One can recognise a tr-type G domain in the interval 60–240 (DRFRNFCIVA…TVVEQIPAPV (181 aa)). Residues 69–76 (AHVDHGKS), 133–137 (DTPGH), and 187–190 (NKVD) each bind GTP.

This sequence belongs to the TRAFAC class translation factor GTPase superfamily. Classic translation factor GTPase family. LepA subfamily.

Its subcellular location is the mitochondrion inner membrane. The catalysed reaction is GTP + H2O = GDP + phosphate + H(+). Promotes mitochondrial protein synthesis. May act as a fidelity factor of the translation reaction, by catalyzing a one-codon backward translocation of tRNAs on improperly translocated ribosomes. Binds to mitochondrial ribosomes in a GTP-dependent manner. The sequence is that of Translation factor GUF1, mitochondrial from Paracoccidioides brasiliensis (strain Pb03).